We begin with the raw amino-acid sequence, 359 residues long: Protein disulfide-isomerase tigA (359 aa).

An N-terminal signal peptide occupies residues 1 to 19 (MVRLSNLVSCLGLASAVTA). Thioredoxin domains follow at residues 20 to 129 (AVVD…EKTG) and 131 to 250 (KPRG…EKTG). Catalysis depends on nucleophile residues Cys-49, Cys-52, Cys-169, and Cys-172. Cystine bridges form between Cys-49–Cys-52 and Cys-169–Cys-172. The Prevents secretion from ER motif lies at 356–359 (KDEL).

Belongs to the protein disulfide isomerase family.

It localises to the endoplasmic reticulum lumen. The enzyme catalyses Catalyzes the rearrangement of -S-S- bonds in proteins.. This Aspergillus niger protein is Protein disulfide-isomerase tigA (tigA).